Here is a 1047-residue protein sequence, read N- to C-terminus: Exportin-6 (1047 aa).

The 67-residue stretch at 32–98 (IDTILNNYKA…KGLLLDIYLN (67 aa)) folds into the Importin N-terminal domain.

This sequence belongs to the exportin family.

The protein localises to the nucleus. It localises to the cytoplasm. In terms of biological role, probably mediates the nuclear export of actin and profilin-actin complexes. This chain is Exportin-6 (xpo6), found in Dictyostelium discoideum (Social amoeba).